A 231-amino-acid chain; its full sequence is Superoxide dismutase [Mn], mitochondrial (231 aa).

Residues 1–27 (MALRTLASRKTLAAAALPLAAAAAARG) constitute a mitochondrion transit peptide. Mn(2+)-binding residues include H55, H103, D192, and H196.

Belongs to the iron/manganese superoxide dismutase family. As to quaternary structure, homotetramer. Requires Mn(2+) as cofactor.

The protein localises to the mitochondrion matrix. It catalyses the reaction 2 superoxide + 2 H(+) = H2O2 + O2. Destroys superoxide anion radicals which are normally produced within the cells and which are toxic to biological systems. This is Superoxide dismutase [Mn], mitochondrial (SODA) from Oryza sativa subsp. japonica (Rice).